Reading from the N-terminus, the 477-residue chain is Protein DETOXIFICATION 5 (477 aa).

A run of 12 helical transmembrane segments spans residues Ala38–Val58, Leu72–Leu92, Phe113–Met133, Ile146–Val166, Ala187–Leu207, Gly211–Val231, Ala263–Leu283, Val292–Ala312, Ala333–Phe353, Leu376–Val396, Val411–Met431, and Leu436–Ala456.

This sequence belongs to the multi antimicrobial extrusion (MATE) (TC 2.A.66.1) family.

The protein localises to the membrane. In Arabidopsis thaliana (Mouse-ear cress), this protein is Protein DETOXIFICATION 5.